The primary structure comprises 367 residues: Flagellar P-ring protein (367 aa).

Positions 1–18 are cleaved as a signal peptide; sequence MFRALITALFCFSGLALA.

Belongs to the FlgI family. As to quaternary structure, the basal body constitutes a major portion of the flagellar organelle and consists of four rings (L,P,S, and M) mounted on a central rod.

Its subcellular location is the periplasm. The protein localises to the bacterial flagellum basal body. Its function is as follows. Assembles around the rod to form the L-ring and probably protects the motor/basal body from shearing forces during rotation. The polypeptide is Flagellar P-ring protein (Rhizorhabdus wittichii (strain DSM 6014 / CCUG 31198 / JCM 15750 / NBRC 105917 / EY 4224 / RW1) (Sphingomonas wittichii)).